Consider the following 459-residue polypeptide: Putative metabolite transport protein YdjK (459 aa).

Residues 1-25 (MEQITKPHCGARLDRLPDCRWHSSM) are Cytoplasmic-facing. A helical membrane pass occupies residues 26-46 (FAIVAFGLLVCWSNAVGGLIL). At 47–60 (AQLKALGWTDNSTT) the chain is on the periplasmic side. The helical transmembrane segment at 61 to 81 (ATFSAITTAGMFLGALVGGII) threads the bilayer. Over 82 to 90 (GDKTGRRNA) the chain is Cytoplasmic. The helical transmembrane segment at 91-111 (FILYEAIHIASMVVGAFSPNM) threads the bilayer. Residue D112 is a topological domain, periplasmic. Residues 113-133 (FLIACRFVMGVGLGALLVTLF) traverse the membrane as a helical segment. At 134-153 (AGFTEYMPGRNRGTWSSRVS) the chain is on the cytoplasmic side. The chain crosses the membrane as a helical span at residues 154–174 (FIGNWSYPLCSLIAMGLTPLI). Residues 175-181 (SAEWNWR) lie on the Periplasmic side of the membrane. A helical transmembrane segment spans residues 182 to 202 (VQLLIPAILSLIATALAWRYF). The Cytoplasmic portion of the chain corresponds to 203-271 (PESPRWLESR…LLKRVILGSC (69 aa)). Residues 272-292 (VLIAMNVVQYTLINWLPTIFM) traverse the membrane as a helical segment. Over 293–301 (TQGINLKDS) the chain is Periplasmic. The helical transmembrane segment at 302 to 322 (IVLNTMSMFGAPFGIFIAMLV) threads the bilayer. The Cytoplasmic segment spans residues 323 to 329 (MDKIPRK). Residues 330-350 (TMGVGLLILIAVLGYIYSLQT) traverse the membrane as a helical segment. Residue S351 is a topological domain, periplasmic. The helical transmembrane segment at 352–372 (MLLITLIGFFLITFVYMYVCY) threads the bilayer. Topologically, residues 373 to 399 (ASAVYVPEIWPTEAKLRGSGLANAVGR) are cytoplasmic. 2 consecutive transmembrane segments (helical) span residues 400–420 (ISGIAAPYAVAVLLSSYGVTG) and 421–441 (VFILLGAVSIIVAIAIATIGI). The Cytoplasmic portion of the chain corresponds to 442-459 (ETKGVSVESLSIDAVANK).

This sequence belongs to the major facilitator superfamily. Sugar transporter (TC 2.A.1.1) family.

It localises to the cell inner membrane. In Escherichia coli (strain K12), this protein is Putative metabolite transport protein YdjK (ydjK).